Consider the following 138-residue polypeptide: Small ribosomal subunit protein bS16 (138 aa).

The segment at 92–138 (QAAKREADAKQAAKEAAEAKAAAEAEAKAAAEAESADAGAEEAPAEA) is disordered. Basic and acidic residues predominate over residues 94-122 (AKREADAKQAAKEAAEAKAAAEAEAKAAA).

This sequence belongs to the bacterial ribosomal protein bS16 family.

The polypeptide is Small ribosomal subunit protein bS16 (Synechococcus sp. (strain WH7803)).